Reading from the N-terminus, the 342-residue chain is Leucine-rich repeat-containing protein 23 (342 aa).

The segment covering Met-1–Glu-30 has biased composition (acidic residues). A disordered region spans residues Met-1–Trp-42. A coiled-coil region spans residues Asp-3–Glu-27. LRR repeat units follow at residues His-91–Thr-112, Asn-113–Pro-133, Tyr-134–Pro-154, Arg-155–Lys-176, Ser-179–Pro-199, Lys-200–Ser-221, Asn-222–Met-243, and Ser-245–Arg-266. The segment at Ala-207–Thr-342 is interaction with RSPH9. Residues Asn-279–Ile-317 form the LRRCT domain. Positions Tyr-306–Glu-332 form a coiled coil. The tract at residues Glu-307–Thr-342 is disordered. Positions Ala-314–Glu-324 are enriched in basic and acidic residues. Acidic residues predominate over residues Gln-325–Thr-342.

In terms of assembly, component of the axonemal radial spoke complex. Interacts with RSPH3. Interacts with RSPH9.

It localises to the cytoplasm. The protein resides in the cytoskeleton. It is found in the flagellum axoneme. Essential for sperm motility and male fertility. Plays an important role in the proper assembly of the third radial spoke (RS3) head and the bridge structure between RS2 and RS3 in the sperm flagella. The sequence is that of Leucine-rich repeat-containing protein 23 (LRRC23) from Bos taurus (Bovine).